Consider the following 318-residue polypeptide: Thymidylate synthase (318 aa).

DUMP-binding positions include Arg-25 and 180 to 181 (RR). The active-site Nucleophile is the Cys-200. DUMP-binding positions include 220-223 (RSGD), Asn-231, and 261-263 (HIY). Asp-223 lines the (6R)-5,10-methylene-5,6,7,8-tetrahydrofolate pocket. A (6R)-5,10-methylene-5,6,7,8-tetrahydrofolate-binding site is contributed by Ala-317.

Belongs to the thymidylate synthase family. Bacterial-type ThyA subfamily. In terms of assembly, homodimer.

The protein resides in the cytoplasm. It catalyses the reaction dUMP + (6R)-5,10-methylene-5,6,7,8-tetrahydrofolate = 7,8-dihydrofolate + dTMP. The protein operates within pyrimidine metabolism; dTTP biosynthesis. Its function is as follows. Catalyzes the reductive methylation of 2'-deoxyuridine-5'-monophosphate (dUMP) to 2'-deoxythymidine-5'-monophosphate (dTMP) while utilizing 5,10-methylenetetrahydrofolate (mTHF) as the methyl donor and reductant in the reaction, yielding dihydrofolate (DHF) as a by-product. This enzymatic reaction provides an intracellular de novo source of dTMP, an essential precursor for DNA biosynthesis. The protein is Thymidylate synthase of Lactobacillus acidophilus (strain ATCC 700396 / NCK56 / N2 / NCFM).